We begin with the raw amino-acid sequence, 348 residues long: Selenide, water dikinase (348 aa).

The active site involves Cys-17. Residues Lys-20 and 47–49 (THD) contribute to the ATP site. Asp-50 serves as a coordination point for Mg(2+). ATP is bound by residues Asp-67, Asp-90, and 138 to 140 (GHT). Asp-90 contacts Mg(2+). Asp-226 contributes to the Mg(2+) binding site.

This sequence belongs to the selenophosphate synthase 1 family. Class I subfamily. As to quaternary structure, homodimer. Requires Mg(2+) as cofactor.

The catalysed reaction is hydrogenselenide + ATP + H2O = selenophosphate + AMP + phosphate + 2 H(+). Its function is as follows. Synthesizes selenophosphate from selenide and ATP. The protein is Selenide, water dikinase of Porphyromonas gingivalis (strain ATCC 33277 / DSM 20709 / CIP 103683 / JCM 12257 / NCTC 11834 / 2561).